A 71-amino-acid chain; its full sequence is Long neurotoxin 2 (71 aa).

5 cysteine pairs are disulfide-bonded: Cys-3–Cys-20, Cys-14–Cys-41, Cys-26–Cys-30, Cys-45–Cys-56, and Cys-57–Cys-62.

Belongs to the three-finger toxin family. Long-chain subfamily. Type II alpha-neurotoxin sub-subfamily. As to expression, expressed by the venom gland.

The protein resides in the secreted. Functionally, binds with high affinity to muscular (alpha-1/CHRNA1) and neuronal (alpha-7/CHRNA7) nicotinic acetylcholine receptor (nAChR) and inhibits acetylcholine from binding to the receptor, thereby impairing neuromuscular and neuronal transmission. This chain is Long neurotoxin 2, found in Naja naja (Indian cobra).